The sequence spans 67 residues: Ferredoxin (67 aa).

4Fe-4S ferredoxin-type domains follow at residues Trp-3–Glu-31 and Pro-36–Ala-67. [4Fe-4S] cluster contacts are provided by Cys-12, Asp-15, and Cys-18. An intrachain disulfide couples Cys-22 to Cys-49. Cys-57 provides a ligand contact to [4Fe-4S] cluster.

[4Fe-4S] cluster is required as a cofactor. It depends on [3Fe-4S] cluster as a cofactor.

Functionally, ferredoxins are iron-sulfur proteins that transfer electrons in a wide variety of metabolic reactions. In Pyrococcus abyssi (strain GE5 / Orsay), this protein is Ferredoxin (fdxA).